The following is a 300-amino-acid chain: Homoserine kinase (300 aa).

Residue Pro86 to Thr96 participates in ATP binding.

It belongs to the GHMP kinase family. Homoserine kinase subfamily.

It localises to the cytoplasm. It catalyses the reaction L-homoserine + ATP = O-phospho-L-homoserine + ADP + H(+). Its pathway is amino-acid biosynthesis; L-threonine biosynthesis; L-threonine from L-aspartate: step 4/5. Functionally, catalyzes the ATP-dependent phosphorylation of L-homoserine to L-homoserine phosphate. In Persephonella marina (strain DSM 14350 / EX-H1), this protein is Homoserine kinase.